The primary structure comprises 380 residues: Cytochrome b (380 aa).

Transmembrane regions (helical) follow at residues 33 to 53 (LGSLLGTCLVLQIVTGLFLAM), 77 to 98 (WVIRYLHANGASMFFICLFLHI), 113 to 133 (WNIGIILLLATMATAFMGYVL), and 178 to 198 (FFTFHFILPFIITALVALHLL). Heme b contacts are provided by histidine 83 and histidine 97. Residues histidine 182 and histidine 196 each coordinate heme b. Residue histidine 201 coordinates a ubiquinone. The next 4 helical transmembrane spans lie at 226 to 246 (TKDILGLFLLLLTLMSLVLFS), 288 to 308 (LGGVLALLLSILILMTIPMLH), 320 to 340 (LSQLTYWLWAANLLTLTWIGG), and 347 to 367 (FITIGQVTSVLYFITILILVP).

It belongs to the cytochrome b family. In terms of assembly, the cytochrome bc1 complex contains 11 subunits: 3 respiratory subunits (MT-CYB, CYC1 and UQCRFS1), 2 core proteins (UQCRC1 and UQCRC2) and 6 low-molecular weight proteins (UQCRH/QCR6, UQCRB/QCR7, UQCRQ/QCR8, UQCR10/QCR9, UQCR11/QCR10 and a cleavage product of UQCRFS1). This cytochrome bc1 complex then forms a dimer. It depends on heme b as a cofactor.

It localises to the mitochondrion inner membrane. Component of the ubiquinol-cytochrome c reductase complex (complex III or cytochrome b-c1 complex) that is part of the mitochondrial respiratory chain. The b-c1 complex mediates electron transfer from ubiquinol to cytochrome c. Contributes to the generation of a proton gradient across the mitochondrial membrane that is then used for ATP synthesis. In Nomascus leucogenys (Northern white-cheeked gibbon), this protein is Cytochrome b (MT-CYB).